The following is a 203-amino-acid chain: Probable chemoreceptor glutamine deamidase CheD (203 aa).

The protein belongs to the CheD family.

It carries out the reaction L-glutaminyl-[protein] + H2O = L-glutamyl-[protein] + NH4(+). In terms of biological role, probably deamidates glutamine residues to glutamate on methyl-accepting chemotaxis receptors (MCPs), playing an important role in chemotaxis. The chain is Probable chemoreceptor glutamine deamidase CheD from Janthinobacterium sp. (strain Marseille) (Minibacterium massiliensis).